A 425-amino-acid polypeptide reads, in one-letter code: GTPase Obg (425 aa).

An Obg domain is found at 1 to 158 (MFVDQVKVYV…RYIVMELKLI (158 aa)). The disordered stretch occupies residues 118–144 (KGGRGGRGNNRFANSSNPAPHISENGE). Residues 159 to 327 (ADVGLVGYPS…LMYAIGDTLA (169 aa)) form the OBG-type G domain. ATP contacts are provided by residues 165 to 172 (GYPSVGKS), 190 to 194 (FTTLT), 211 to 214 (DLPG), 281 to 284 (NKME), and 308 to 310 (SAA). Mg(2+) is bound by residues Ser-172 and Thr-192. In terms of domain architecture, OCT spans 348 to 425 (RAEKEPDAFE…IGKLEFDFVE (78 aa)).

The protein belongs to the TRAFAC class OBG-HflX-like GTPase superfamily. OBG GTPase family. In terms of assembly, monomer. Mg(2+) is required as a cofactor.

Its subcellular location is the cytoplasm. Its function is as follows. An essential GTPase which binds GTP, GDP and possibly (p)ppGpp with moderate affinity, with high nucleotide exchange rates and a fairly low GTP hydrolysis rate. Plays a role in control of the cell cycle, stress response, ribosome biogenesis and in those bacteria that undergo differentiation, in morphogenesis control. In Brevibacillus brevis (strain 47 / JCM 6285 / NBRC 100599), this protein is GTPase Obg.